The chain runs to 451 residues: Phosphoglucosamine mutase (451 aa).

The active-site Phosphoserine intermediate is the Ser-101. Mg(2+) contacts are provided by Ser-101, Asp-240, Asp-242, and Asp-244. Phosphoserine is present on Ser-101.

Belongs to the phosphohexose mutase family. Mg(2+) serves as cofactor. In terms of processing, activated by phosphorylation.

The catalysed reaction is alpha-D-glucosamine 1-phosphate = D-glucosamine 6-phosphate. Catalyzes the conversion of glucosamine-6-phosphate to glucosamine-1-phosphate. In Streptococcus pyogenes serotype M1, this protein is Phosphoglucosamine mutase.